A 137-amino-acid polypeptide reads, in one-letter code: MRYLGLDLGRARIGLALADDVLRTARPLSVVRHRTREADLASIAATLREWEVGTAVVGLPLNMDGSEGASARYARAFAEELARATGVPVELFDERLSTFEAESRLREQGFSARELRGRVDAEAAAVILQGWLDGRHA.

It belongs to the YqgF nuclease family.

It localises to the cytoplasm. Its function is as follows. Could be a nuclease involved in processing of the 5'-end of pre-16S rRNA. The protein is Putative pre-16S rRNA nuclease of Anaeromyxobacter sp. (strain Fw109-5).